A 95-amino-acid polypeptide reads, in one-letter code: Aspartyl/glutamyl-tRNA(Asn/Gln) amidotransferase subunit C (95 aa).

This sequence belongs to the GatC family. In terms of assembly, heterotrimer of A, B and C subunits.

It catalyses the reaction L-glutamyl-tRNA(Gln) + L-glutamine + ATP + H2O = L-glutaminyl-tRNA(Gln) + L-glutamate + ADP + phosphate + H(+). It carries out the reaction L-aspartyl-tRNA(Asn) + L-glutamine + ATP + H2O = L-asparaginyl-tRNA(Asn) + L-glutamate + ADP + phosphate + 2 H(+). Functionally, allows the formation of correctly charged Asn-tRNA(Asn) or Gln-tRNA(Gln) through the transamidation of misacylated Asp-tRNA(Asn) or Glu-tRNA(Gln) in organisms which lack either or both of asparaginyl-tRNA or glutaminyl-tRNA synthetases. The reaction takes place in the presence of glutamine and ATP through an activated phospho-Asp-tRNA(Asn) or phospho-Glu-tRNA(Gln). The sequence is that of Aspartyl/glutamyl-tRNA(Asn/Gln) amidotransferase subunit C from Campylobacter curvus (strain 525.92).